The primary structure comprises 134 residues: ATP synthase epsilon chain, chloroplastic (134 aa).

It belongs to the ATPase epsilon chain family. In terms of assembly, F-type ATPases have 2 components, CF(1) - the catalytic core - and CF(0) - the membrane proton channel. CF(1) has five subunits: alpha(3), beta(3), gamma(1), delta(1), epsilon(1). CF(0) has three main subunits: a, b and c.

The protein localises to the plastid. It is found in the chloroplast thylakoid membrane. Its function is as follows. Produces ATP from ADP in the presence of a proton gradient across the membrane. This is ATP synthase epsilon chain, chloroplastic from Chlorella vulgaris (Green alga).